The sequence spans 184 residues: Photosystem I assembly protein Ycf4 (184 aa).

Transmembrane regions (helical) follow at residues 22-42 (FCWAFILFLGSLGFLLVGTSS) and 57-77 (IIFFPQGIVMSFYGIAGLFIS).

This sequence belongs to the Ycf4 family.

It localises to the plastid. It is found in the chloroplast thylakoid membrane. Seems to be required for the assembly of the photosystem I complex. The sequence is that of Photosystem I assembly protein Ycf4 from Crucihimalaya wallichii (Rock-cress).